The sequence spans 493 residues: MADSKPLRTLDGDPVAVEALLRDVFGIVVDEAIRKGTNASEKVCEWKEPEELKQLLDLELQSQGESRERILERCRAVIHYSVKTGHPRFFNQLFSGLDPHALAGRIITESLNTSQYTYEIAPVFVLMEEEVLKKLRALVGWNTGDGVFCPGGSISNMYAINLARFQRYPDCKQRGLRALPPLALFTSKECHYSITKGAAFLGLGTDSVRVVKADERGKMIPEDLERQISLAEAEGSVPFLVSATSGTTVLGAFDPLDAIADVCQRHGLWLHVDAAWGGSVLLSRTHRHLLDGIQRADSVAWNPHKLLAAGLQCSALLLRDTSNLLKRCHGSQASYLFQQDKFYNVALDTGDKVVQCGRRVDCLKLWLMWKAQGGQGLEWRIDQAFALTRYLVEEIKKREGFELVMEPEFVNVCFWFVPPSLRGKKESPDYSQRLSQVAPVLKERMVKKGTMMIGYQPHGTRANFFRMVVANPILVQADIDFLLGELERLGQDL.

An N6-(pyridoxal phosphate)lysine modification is found at Lys305.

It belongs to the group II decarboxylase family. Homodimer. Pyridoxal 5'-phosphate is required as a cofactor. As to expression, expressed in brain, liver and kidney.

It catalyses the reaction L-aspartate + H(+) = beta-alanine + CO2. The catalysed reaction is 3-sulfino-L-alanine + H(+) = hypotaurine + CO2. The enzyme catalyses L-cysteate + H(+) = taurine + CO2. The protein operates within organosulfur biosynthesis; taurine biosynthesis; hypotaurine from L-cysteine: step 2/2. Functionally, catalyzes the decarboxylation of L-aspartate, 3-sulfino-L-alanine (cysteine sulfinic acid), and L-cysteate to beta-alanine, hypotaurine and taurine, respectively. The preferred substrate is 3-sulfino-L-alanine. Does not exhibit any decarboxylation activity toward glutamate. The protein is Cysteine sulfinic acid decarboxylase (Csad) of Rattus norvegicus (Rat).